The chain runs to 567 residues: Signal transducer and activator of transcription b (567 aa).

The SH2 domain maps to 449–548; that stretch reads WYDGLVYGFC…LGGRNKPRIR (100 aa).

This sequence belongs to the transcription factor STAT family. May interact with sodium-dependent transporter snf-12; the interaction is probably direct.

The protein resides in the cytoplasm. It is found in the nucleus. It localises to the vesicle. Carries out a dual function: signal transduction and activation of transcription. Required, in concert with transcription factor elt-3, for up-regulation of the vacuolar H(+)-ATPase and acceleration of lysosome maturation at molt. As part of the innate immune response to molting and injury of the adult epidermis, positively regulates the expression of epidermal antimicrobial peptides, such as nlp-29. Through positively modulating the expression of epidermal antimicrobial peptides, such as nlp-29, plays a role in resistance to fungal infection and in the response to physical wounding and phorbol ester PMA treatment. Functions cell autonomously in the epidermis, in concert with sodium-dependent transporter snf-12, probably acting at vesicular membranes, downstream of a p38 MAPK/pmk-1 pathway. The chain is Signal transducer and activator of transcription b from Caenorhabditis elegans.